The primary structure comprises 344 residues: uncharacterized protein (344 aa).

The stretch at 221-249 forms a coiled coil; sequence IQAQSMDEQKQIQEIYQNVEKLKEDVTKN.

Belongs to the IIV-6 287R family.

This is an uncharacterized protein from Aedes vexans (Inland floodwater mosquito).